The following is a 173-amino-acid chain: Crossover junction endodeoxyribonuclease RuvC (173 aa).

Residues Asp8, Glu67, and Asp139 contribute to the active site. The Mg(2+) site is built by Asp8, Glu67, and Asp139.

The protein belongs to the RuvC family. As to quaternary structure, homodimer which binds Holliday junction (HJ) DNA. The HJ becomes 2-fold symmetrical on binding to RuvC with unstacked arms; it has a different conformation from HJ DNA in complex with RuvA. In the full resolvosome a probable DNA-RuvA(4)-RuvB(12)-RuvC(2) complex forms which resolves the HJ. Mg(2+) is required as a cofactor.

It localises to the cytoplasm. The enzyme catalyses Endonucleolytic cleavage at a junction such as a reciprocal single-stranded crossover between two homologous DNA duplexes (Holliday junction).. Functionally, the RuvA-RuvB-RuvC complex processes Holliday junction (HJ) DNA during genetic recombination and DNA repair. Endonuclease that resolves HJ intermediates. Cleaves cruciform DNA by making single-stranded nicks across the HJ at symmetrical positions within the homologous arms, yielding a 5'-phosphate and a 3'-hydroxyl group; requires a central core of homology in the junction. The consensus cleavage sequence is 5'-(A/T)TT(C/G)-3'. Cleavage occurs on the 3'-side of the TT dinucleotide at the point of strand exchange. HJ branch migration catalyzed by RuvA-RuvB allows RuvC to scan DNA until it finds its consensus sequence, where it cleaves and resolves the cruciform DNA. In Vibrio vulnificus (strain YJ016), this protein is Crossover junction endodeoxyribonuclease RuvC.